The following is a 430-amino-acid chain: WD repeat-containing protein jip5 (430 aa).

WD repeat units lie at residues 9 to 48, 72 to 111, 117 to 158, 215 to 262, 272 to 318, and 323 to 360; these read PLSS…AAAE, RHKG…VTSK, TNTD…SFKS, DQEE…DQSE, AGGE…GVVE, and DDIE…EEEE. Residues 356–374 are compositionally biased toward acidic residues; it reads EEEEEEEEEEQEDIEDNDD. The tract at residues 356–430 is disordered; it reads EEEEEEEEEE…NGILKFKGME (75 aa). Positions 382–397 are enriched in basic and acidic residues; it reads HALERDSDDSDARADS. The segment covering 405-416 has biased composition (basic residues); sequence RKKRKKKKKGKK.

It belongs to the WD repeat WDR55 family.

It localises to the nucleus. The protein resides in the nucleolus. This is WD repeat-containing protein jip5 (jip5) from Botryotinia fuckeliana (strain B05.10) (Noble rot fungus).